A 124-amino-acid chain; its full sequence is Small ribosomal subunit protein bS6 (124 aa).

The interval 96 to 124 (ETGPSPMMKEVQREEAKKAAAAQPTEAQA) is disordered. Low complexity predominate over residues 114-124 (AAAAQPTEAQA).

Belongs to the bacterial ribosomal protein bS6 family.

Its function is as follows. Binds together with bS18 to 16S ribosomal RNA. The sequence is that of Small ribosomal subunit protein bS6 from Burkholderia vietnamiensis (strain G4 / LMG 22486) (Burkholderia cepacia (strain R1808)).